A 326-amino-acid chain; its full sequence is Undecaprenyl-phosphate 4-deoxy-4-formamido-L-arabinose transferase (326 aa).

The next 2 helical transmembrane spans lie at 235–255 and 270–290; these read MLSVIGSMIALLGFAFSLLLI and VFMLFAVLFIFIGAQFIGMGL.

The protein belongs to the glycosyltransferase 2 family.

Its subcellular location is the cell inner membrane. The catalysed reaction is UDP-4-deoxy-4-formamido-beta-L-arabinose + di-trans,octa-cis-undecaprenyl phosphate = 4-deoxy-4-formamido-alpha-L-arabinopyranosyl di-trans,octa-cis-undecaprenyl phosphate + UDP. The protein operates within glycolipid biosynthesis; 4-amino-4-deoxy-alpha-L-arabinose undecaprenyl phosphate biosynthesis; 4-amino-4-deoxy-alpha-L-arabinose undecaprenyl phosphate from UDP-4-deoxy-4-formamido-beta-L-arabinose and undecaprenyl phosphate: step 1/2. Its pathway is bacterial outer membrane biogenesis; lipopolysaccharide biosynthesis. Catalyzes the transfer of 4-deoxy-4-formamido-L-arabinose from UDP to undecaprenyl phosphate. The modified arabinose is attached to lipid A and is required for resistance to polymyxin and cationic antimicrobial peptides. The protein is Undecaprenyl-phosphate 4-deoxy-4-formamido-L-arabinose transferase of Sodalis glossinidius (strain morsitans).